The sequence spans 341 residues: DnaJ homolog subfamily C member 22 (341 aa).

Positions Gly4 to Trp50 constitute a TM2 domain. A run of 7 helical transmembrane segments spans residues Leu5–Leu25, His30–Trp50, Phe81–Ser101, Phe105–Gly125, Leu135–Ile155, Val185–Ala205, and Val232–Phe252. Positions Leu277–Arg341 constitute a J domain.

The protein resides in the membrane. May function as a co-chaperone. The polypeptide is DnaJ homolog subfamily C member 22 (Dnajc22) (Rattus norvegicus (Rat)).